The sequence spans 272 residues: Large ribosomal subunit protein uL2 (272 aa).

Residues 247–272 form a disordered region; sequence PWGQPCKGFKTRNNKRTNSSIIKRRK. Polar residues predominate over residues 262–272; that stretch reads RTNSSIIKRRK.

The protein belongs to the universal ribosomal protein uL2 family. In terms of assembly, part of the 50S ribosomal subunit. Forms a bridge to the 30S subunit in the 70S ribosome.

Its function is as follows. One of the primary rRNA binding proteins. Required for association of the 30S and 50S subunits to form the 70S ribosome, for tRNA binding and peptide bond formation. It has been suggested to have peptidyltransferase activity; this is somewhat controversial. Makes several contacts with the 16S rRNA in the 70S ribosome. The protein is Large ribosomal subunit protein uL2 of Bdellovibrio bacteriovorus (strain ATCC 15356 / DSM 50701 / NCIMB 9529 / HD100).